The sequence spans 345 residues: S-adenosylmethionine:tRNA ribosyltransferase-isomerase (345 aa).

It belongs to the QueA family. Monomer.

The protein localises to the cytoplasm. It catalyses the reaction 7-aminomethyl-7-carbaguanosine(34) in tRNA + S-adenosyl-L-methionine = epoxyqueuosine(34) in tRNA + adenine + L-methionine + 2 H(+). It participates in tRNA modification; tRNA-queuosine biosynthesis. In terms of biological role, transfers and isomerizes the ribose moiety from AdoMet to the 7-aminomethyl group of 7-deazaguanine (preQ1-tRNA) to give epoxyqueuosine (oQ-tRNA). In Aromatoleum aromaticum (strain DSM 19018 / LMG 30748 / EbN1) (Azoarcus sp. (strain EbN1)), this protein is S-adenosylmethionine:tRNA ribosyltransferase-isomerase.